The following is a 1004-amino-acid chain: Outer cell wall protein (1004 aa).

The N-terminal stretch at 1 to 24 is a signal peptide; sequence MNKKVVLSVLSTTLVASVAASAFA.

As to quaternary structure, the outer cell wall layer is composed of subunits of the outer cell wall protein. These proteins form a hexagonal array with a lattice constant of 14.5 nm in the outer cell wall layers.

It is found in the secreted. The protein localises to the cell wall. It localises to the S-layer. The outer wall protein binds to the middle cell wall protein. This is Outer cell wall protein from Brevibacillus brevis (strain 47 / JCM 6285 / NBRC 100599).